The sequence spans 313 residues: MNWLTNVVRPKIRNMLRRETPENLWIKCPDSGQLVFYKDVEANQFVIPGSNYHMRMGAVARLKSIFDNETWYDVALPDVTPDPLKFRDEKKYVDRIKDARARTNLNDAIKVGYGKLEGAAVVIAVQDFDFMGGSLGMAAGEAIVRGLELAVEKKSPFIVFAASGGARMQEGILSLMQMPRTTVAVQMLREAKQPYIVVLTNPTTGGVTASYAMLGDVQIAEPGALIGFAGARVIEQTIREKLPEGFQRAEYLKEHGMVDMVVHRHDLRPTLARLCRLLTKAPALETASKSVQPVVSPAQIVSASETAPAAPHA.

Residues 24–293 (LWIKCPDSGQ…LETASKSVQP (270 aa)) form the CoA carboxyltransferase N-terminal domain.

This sequence belongs to the AccD/PCCB family. In terms of assembly, acetyl-CoA carboxylase is a heterohexamer composed of biotin carboxyl carrier protein (AccB), biotin carboxylase (AccC) and two subunits each of ACCase subunit alpha (AccA) and ACCase subunit beta (AccD).

The protein localises to the cytoplasm. It catalyses the reaction N(6)-carboxybiotinyl-L-lysyl-[protein] + acetyl-CoA = N(6)-biotinyl-L-lysyl-[protein] + malonyl-CoA. Its pathway is lipid metabolism; malonyl-CoA biosynthesis; malonyl-CoA from acetyl-CoA: step 1/1. Its function is as follows. Component of the acetyl coenzyme A carboxylase (ACC) complex. Biotin carboxylase (BC) catalyzes the carboxylation of biotin on its carrier protein (BCCP) and then the CO(2) group is transferred by the transcarboxylase to acetyl-CoA to form malonyl-CoA. This Bradyrhizobium diazoefficiens (strain JCM 10833 / BCRC 13528 / IAM 13628 / NBRC 14792 / USDA 110) protein is Acetyl-coenzyme A carboxylase carboxyl transferase subunit beta.